We begin with the raw amino-acid sequence, 460 residues long: Proline--tRNA ligase (460 aa).

It belongs to the class-II aminoacyl-tRNA synthetase family. ProS type 3 subfamily. In terms of assembly, homodimer.

It is found in the cytoplasm. The catalysed reaction is tRNA(Pro) + L-proline + ATP = L-prolyl-tRNA(Pro) + AMP + diphosphate. Catalyzes the attachment of proline to tRNA(Pro) in a two-step reaction: proline is first activated by ATP to form Pro-AMP and then transferred to the acceptor end of tRNA(Pro). This chain is Proline--tRNA ligase, found in Methanococcus maripaludis (strain C6 / ATCC BAA-1332).